We begin with the raw amino-acid sequence, 71 residues long: Disintegrin halysin (71 aa).

In terms of domain architecture, Disintegrin spans 1 to 71 (EAGEECDCGS…ISAGCPRNPF (71 aa)). Cystine bridges form between Cys-6–Cys-21, Cys-8–Cys-16, Cys-15–Cys-38, Cys-29–Cys-35, Cys-34–Cys-59, and Cys-47–Cys-66. The Cell attachment site signature appears at 51–53 (RGD).

Belongs to the venom metalloproteinase (M12B) family. P-II subfamily. P-IIa sub-subfamily. In terms of assembly, monomer. Expressed by the venom gland.

Its subcellular location is the secreted. Inhibits fibrinogen interaction with platelets. Acts by binding to alpha-IIb/beta-3 (ITGA2B/ITGB3) on the platelet surface and inhibits aggregation induced by ADP, thrombin, platelet-activating factor and collagen. The chain is Disintegrin halysin from Gloydius blomhoffii (Mamushi).